The primary structure comprises 758 residues: MTTLHFSGFPRVGAFRELKFAQEKYWRKEISEQELLAVAKDLREKNWKHQAAANADYVAVGDFTFYDHILDLQVATGAIPARFGFDSQNLSLEQFFQLARGNKDQFAIEMTKWFDTNYHYLVPEFHADTEFKANAKHYVQQLQEAQALGLKAKPTVVGPLTFLWVGKEKGAVEFDRLSLLPKLLPVYVEILTALVEAGAEWIQIDEPALTVDLPKEWVEAYKDVYATLSKVSAKILLSTYFGSVAEHAALLKSLPVDGLHIDLVRAPEQLDAFADYDKVLSAGVIDGRNIWRANLNKVLETVELLQAKLGDRLWISSSCSLLHTPFDLSVEEKLKANKPDLYSWLAFTLQKTQELRVLKAALNEGRDSVAEELAASQAAADSRANSSEIHRADVAKRLADLPANADQRKSPFADRIKAQQAWLNLPLLPTTNIGSFPQTTEIRQARAAFKKGELSAADYEAAMKKEIALVVEEQEKLDLDVLVHGEAERNDMVEYFGELLSGFAFTQYGWVQSYGSRCVKPPIIFGDVSRPEAMTVAWSTYAQSLTKRPMKGMLTGPVTILQWSFVRNDIPRSTVCKQIALALNDEVLDLEKAGIKVIQIDEPAIREGLPLKRADWDAYLNWAGESFRLSSTGCEDSTQIHTHMCYSEFNDILPAIAAMDADVITIETSRSDMELLTAFGEFKYPNDIGPGVYDIHSPRVPTEAEVEHLLRKAIEVVPVERLWVNPDCGLKTRGWKETLEQLQVMMNVTHKLRAELAK.

Residues 16-19 and lysine 112 contribute to the 5-methyltetrahydropteroyltri-L-glutamate site; that span reads RELK. Residues 433-435 and glutamate 486 contribute to the L-homocysteine site; that span reads IGS. L-methionine-binding positions include 433–435 and glutamate 486; that span reads IGS. 5-methyltetrahydropteroyltri-L-glutamate-binding positions include 517–518 and tryptophan 563; that span reads RC. Position 601 (aspartate 601) interacts with L-homocysteine. Position 601 (aspartate 601) interacts with L-methionine. Glutamate 607 contacts 5-methyltetrahydropteroyltri-L-glutamate. Histidine 643, cysteine 645, and glutamate 667 together coordinate Zn(2+). The Proton donor role is filled by histidine 696. A Zn(2+)-binding site is contributed by cysteine 728.

This sequence belongs to the vitamin-B12 independent methionine synthase family. Requires Zn(2+) as cofactor.

It catalyses the reaction 5-methyltetrahydropteroyltri-L-glutamate + L-homocysteine = tetrahydropteroyltri-L-glutamate + L-methionine. The protein operates within amino-acid biosynthesis; L-methionine biosynthesis via de novo pathway; L-methionine from L-homocysteine (MetE route): step 1/1. Its function is as follows. Catalyzes the transfer of a methyl group from 5-methyltetrahydrofolate to homocysteine resulting in methionine formation. The protein is 5-methyltetrahydropteroyltriglutamate--homocysteine methyltransferase of Neisseria meningitidis serogroup A / serotype 4A (strain DSM 15465 / Z2491).